The sequence spans 239 residues: L-cystine transport system permease protein TcyL (239 aa).

Positions 21 to 216 (LPVTLYILTL…AVAVLFEWFF (196 aa)) constitute an ABC transmembrane type-1 domain. 4 consecutive transmembrane segments (helical) span residues 25–45 (LYIL…LALP), 69–89 (IMVQ…LIGI), 96–116 (PFYA…AEII), and 196–216 (EVYI…EWFF).

This sequence belongs to the binding-protein-dependent transport system permease family. As to quaternary structure, the complex is composed of two ATP-binding proteins (TcyN), two transmembrane proteins (TcyL and TcyM) and two solute-binding proteins (TcyJ and TcyK).

The protein resides in the cell membrane. Its function is as follows. Part of the ABC transporter complex TcyJKLMN involved in L-cystine import. Probably responsible for the translocation of the substrate across the membrane. Is also involved in cystathionine, djenkolate, and S-methylcysteine transport. The polypeptide is L-cystine transport system permease protein TcyL (tcyL) (Bacillus subtilis (strain 168)).